A 269-amino-acid polypeptide reads, in one-letter code: Malonyl-[acyl-carrier protein] O-methyltransferase (269 aa).

Belongs to the methyltransferase superfamily.

The enzyme catalyses malonyl-[ACP] + S-adenosyl-L-methionine = malonyl-[ACP] methyl ester + S-adenosyl-L-homocysteine. The protein operates within cofactor biosynthesis; biotin biosynthesis. Its function is as follows. Converts the free carboxyl group of a malonyl-thioester to its methyl ester by transfer of a methyl group from S-adenosyl-L-methionine (SAM). It allows to synthesize pimeloyl-ACP via the fatty acid synthetic pathway. The polypeptide is Malonyl-[acyl-carrier protein] O-methyltransferase (Bacillus anthracis).